The following is an 84-amino-acid chain: Sulfur carrier protein TusA (84 aa).

Cysteine 19 serves as the catalytic Cysteine persulfide intermediate.

The protein belongs to the sulfur carrier protein TusA family. In terms of assembly, interacts with IscS.

It is found in the cytoplasm. Its pathway is tRNA modification. Sulfur carrier protein involved in sulfur trafficking in the cell. Part of a sulfur-relay system required for 2-thiolation during synthesis of 2-thiouridine of the modified wobble base 5-methylaminomethyl-2-thiouridine (mnm(5)s(2)U) in tRNA. Interacts with IscS and stimulates its cysteine desulfurase activity. Accepts an activated sulfur from IscS, which is then transferred to TusD, and thus determines the direction of sulfur flow from IscS to 2-thiouridine formation. Also appears to be involved in sulfur transfer for the biosynthesis of molybdopterin. The protein is Sulfur carrier protein TusA of Sodalis glossinidius (strain morsitans).